The primary structure comprises 351 residues: Photosystem II D2 protein (351 aa).

The helical transmembrane segment at C39–T59 threads the bilayer. Residue H116 coordinates chlorophyll a. Residues G123–P139 form a helical membrane-spanning segment. Pheophytin a contacts are provided by Q128 and N141. Residues V151–S164 form a helical membrane-spanning segment. H196 lines the chlorophyll a pocket. The helical transmembrane segment at G206–E226 threads the bilayer. 2 residues coordinate a plastoquinone: H213 and F260. H213 is a Fe cation binding site. Position 267 (H267) interacts with Fe cation. Residues G277–R293 form a helical membrane-spanning segment.

The protein belongs to the reaction center PufL/M/PsbA/D family. In terms of assembly, PSII is composed of 1 copy each of membrane proteins PsbA, PsbB, PsbC, PsbD, PsbE, PsbF, PsbH, PsbI, PsbJ, PsbK, PsbL, PsbM, PsbT, PsbX, PsbY, PsbZ, Psb30/Ycf12, peripheral proteins PsbO, CyanoQ (PsbQ), PsbU, PsbV and a large number of cofactors. It forms dimeric complexes. It depends on The D1/D2 heterodimer binds P680, chlorophylls that are the primary electron donor of PSII, and subsequent electron acceptors. It shares a non-heme iron and each subunit binds pheophytin, quinone, additional chlorophylls, carotenoids and lipids. There is also a Cl(-1) ion associated with D1 and D2, which is required for oxygen evolution. The PSII complex binds additional chlorophylls, carotenoids and specific lipids. as a cofactor.

Its subcellular location is the cellular thylakoid membrane. The catalysed reaction is 2 a plastoquinone + 4 hnu + 2 H2O = 2 a plastoquinol + O2. Its function is as follows. Photosystem II (PSII) is a light-driven water:plastoquinone oxidoreductase that uses light energy to abstract electrons from H(2)O, generating O(2) and a proton gradient subsequently used for ATP formation. It consists of a core antenna complex that captures photons, and an electron transfer chain that converts photonic excitation into a charge separation. The D1/D2 (PsbA/PsbD) reaction center heterodimer binds P680, the primary electron donor of PSII as well as several subsequent electron acceptors. D2 is needed for assembly of a stable PSII complex. This chain is Photosystem II D2 protein, found in Nostoc sp. (strain PCC 7120 / SAG 25.82 / UTEX 2576).